Consider the following 384-residue polypeptide: Galactokinase (384 aa).

34–37 (EHTD) lines the substrate pocket. 123 to 129 (SSGLSSS) contributes to the ATP binding site. Mg(2+) contacts are provided by S129 and E161. The active-site Proton acceptor is the D173. Y222 contacts substrate.

This sequence belongs to the GHMP kinase family. GalK subfamily.

The protein localises to the cytoplasm. It carries out the reaction alpha-D-galactose + ATP = alpha-D-galactose 1-phosphate + ADP + H(+). It participates in carbohydrate metabolism; galactose metabolism. Catalyzes the transfer of the gamma-phosphate of ATP to D-galactose to form alpha-D-galactose-1-phosphate (Gal-1-P). In Haemophilus influenzae (strain ATCC 51907 / DSM 11121 / KW20 / Rd), this protein is Galactokinase.